The primary structure comprises 357 residues: UDP-3-O-acylglucosamine N-acyltransferase (357 aa).

Catalysis depends on His-258, which acts as the Proton acceptor.

It belongs to the transferase hexapeptide repeat family. LpxD subfamily. As to quaternary structure, homotrimer.

It carries out the reaction a UDP-3-O-[(3R)-3-hydroxyacyl]-alpha-D-glucosamine + a (3R)-hydroxyacyl-[ACP] = a UDP-2-N,3-O-bis[(3R)-3-hydroxyacyl]-alpha-D-glucosamine + holo-[ACP] + H(+). It functions in the pathway bacterial outer membrane biogenesis; LPS lipid A biosynthesis. In terms of biological role, catalyzes the N-acylation of UDP-3-O-acylglucosamine using 3-hydroxyacyl-ACP as the acyl donor. Is involved in the biosynthesis of lipid A, a phosphorylated glycolipid that anchors the lipopolysaccharide to the outer membrane of the cell. This is UDP-3-O-acylglucosamine N-acyltransferase from Azorhizobium caulinodans (strain ATCC 43989 / DSM 5975 / JCM 20966 / LMG 6465 / NBRC 14845 / NCIMB 13405 / ORS 571).